The primary structure comprises 391 residues: GTPase HflX (391 aa).

Positions 162–181 (LAQQRGGAKGTRGASRGAGE) are disordered. Residues 222-391 (KIGAIVGYTN…KITDIIIFDK (170 aa)) form the Hflx-type G domain. GTP is bound by residues 228–235 (GYTNAGKS), 253–257 (FATLD), 278–281 (DTVG), 344–347 (NKMD), and 369–371 (SVT). Residues S235 and T255 each coordinate Mg(2+).

The protein belongs to the TRAFAC class OBG-HflX-like GTPase superfamily. HflX GTPase family. Monomer. Associates with the 50S ribosomal subunit. Mg(2+) is required as a cofactor.

Its subcellular location is the cytoplasm. Its function is as follows. GTPase that associates with the 50S ribosomal subunit and may have a role during protein synthesis or ribosome biogenesis. This Treponema denticola (strain ATCC 35405 / DSM 14222 / CIP 103919 / JCM 8153 / KCTC 15104) protein is GTPase HflX.